The chain runs to 432 residues: MKFTLVATVLLTFSLSAFAVEYPVLTTASPDQVGFDSQKLHRLDGWIQNQIDAGYPSINLLVIKDNHIVLQKAWGYAKKYDGSTLLAHPIRATTNTMYDLASNTKMYATNFALQKLVYEGKIDVNDLVSKYIPGVKDMPGDKIKGKDKLRIIDILHHVAGFPADPQYPNKNVAGKLFSQSKSTTLEMIKKTPLEYQPGSKHIYSDVDYMILGFIIESITAMPLDRYVETTIYKPLGLKHTVFNPLMKGFTPPQIAATELHGNTRDGVIHFPNIRTNTLWGQVHDEKAWYSMGGVSGHAGLFSDTHDMAVLMQVMLNGGGYGNVKLFDDKTVAQFTRRSPEDATFGLGWRVNGNASMTPTFGVLASPQTYGHTGWTGTLTSIDPVNHMAIVILGNRPHSPVANPKVNPNVFVSGLLPAATYGWIVDQIYGSLK.

The chain crosses the membrane as a helical; Signal-anchor span at residues 7 to 25; sequence ATVLLTFSLSAFAVEYPVL.

This sequence belongs to the peptidase S12 family. YfeW subfamily.

It localises to the cell inner membrane. It carries out the reaction Preferential cleavage: (Ac)2-L-Lys-D-Ala-|-D-Ala. Also transpeptidation of peptidyl-alanyl moieties that are N-acyl substituents of D-alanine.. The polypeptide is Putative D-alanyl-D-alanine carboxypeptidase (Salmonella paratyphi A (strain ATCC 9150 / SARB42)).